Consider the following 631-residue polypeptide: BTB/POZ domain-containing protein At1g67900 (631 aa).

Residues 28–93 enclose the BTB domain; that stretch reads SDFTIEVSGS…CYGITITISA (66 aa). Residues 200–509 enclose the NPH3 domain; that stretch reads GWWAEDIAEL…VQVLFYEQAR (310 aa). The disordered stretch occupies residues 361–399; sequence QTSPPTSPLRGKKGMMDRRRRSRSAENIDLEFQESRRSS. The segment covering 370 to 382 has biased composition (basic residues); the sequence is RGKKGMMDRRRRS. Tyr450 bears the Phosphotyrosine mark. Ser567 is subject to Phosphoserine.

The protein belongs to the NPH3 family.

It participates in protein modification; protein ubiquitination. Functionally, may act as a substrate-specific adapter of an E3 ubiquitin-protein ligase complex (CUL3-RBX1-BTB) which mediates the ubiquitination and subsequent proteasomal degradation of target proteins. The protein is BTB/POZ domain-containing protein At1g67900 of Arabidopsis thaliana (Mouse-ear cress).